A 378-amino-acid polypeptide reads, in one-letter code: Mannitol-1-phosphate 5-dehydrogenase (378 aa).

Position 4–15 (4–15) interacts with NAD(+); it reads SVHFGAGNIGRG.

Belongs to the mannitol dehydrogenase family.

The enzyme catalyses D-mannitol 1-phosphate + NAD(+) = beta-D-fructose 6-phosphate + NADH + H(+). This is Mannitol-1-phosphate 5-dehydrogenase from Streptococcus pneumoniae (strain ATCC 700669 / Spain 23F-1).